The primary structure comprises 326 residues: tRNA-modifying protein YgfZ (326 aa).

Residues W27 and W189 each contribute to the folate site.

This sequence belongs to the tRNA-modifying YgfZ family.

The protein resides in the cytoplasm. In terms of biological role, folate-binding protein involved in regulating the level of ATP-DnaA and in the modification of some tRNAs. It is probably a key factor in regulatory networks that act via tRNA modification, such as initiation of chromosomal replication. The protein is tRNA-modifying protein YgfZ of Escherichia coli O139:H28 (strain E24377A / ETEC).